The sequence spans 289 residues: ATP synthase gamma chain (289 aa).

This sequence belongs to the ATPase gamma chain family. In terms of assembly, F-type ATPases have 2 components, CF(1) - the catalytic core - and CF(0) - the membrane proton channel. CF(1) has five subunits: alpha(3), beta(3), gamma(1), delta(1), epsilon(1). CF(0) has three main subunits: a, b and c.

Its subcellular location is the cell inner membrane. In terms of biological role, produces ATP from ADP in the presence of a proton gradient across the membrane. The gamma chain is believed to be important in regulating ATPase activity and the flow of protons through the CF(0) complex. The polypeptide is ATP synthase gamma chain (Aromatoleum aromaticum (strain DSM 19018 / LMG 30748 / EbN1) (Azoarcus sp. (strain EbN1))).